A 384-amino-acid chain; its full sequence is DNA replication and repair protein RecF (384 aa).

ATP is bound at residue 43-50 (GENGSGKT).

Belongs to the RecF family.

It is found in the cytoplasm. In terms of biological role, the RecF protein is involved in DNA metabolism; it is required for DNA replication and normal SOS inducibility. RecF binds preferentially to single-stranded, linear DNA. It also seems to bind ATP. The protein is DNA replication and repair protein RecF of Brucella suis biovar 1 (strain 1330).